Consider the following 283-residue polypeptide: NADPH-dependent 7-cyano-7-deazaguanine reductase (283 aa).

Position 89–91 (89–91 (IES)) interacts with substrate. 91 to 92 (SK) serves as a coordination point for NADPH. The Thioimide intermediate role is filled by C190. D197 functions as the Proton donor in the catalytic mechanism. 229-230 (HE) is a substrate binding site. 258 to 259 (RG) serves as a coordination point for NADPH.

The protein belongs to the GTP cyclohydrolase I family. QueF type 2 subfamily. In terms of assembly, homodimer.

The protein localises to the cytoplasm. It catalyses the reaction 7-aminomethyl-7-carbaguanine + 2 NADP(+) = 7-cyano-7-deazaguanine + 2 NADPH + 3 H(+). It participates in tRNA modification; tRNA-queuosine biosynthesis. In terms of biological role, catalyzes the NADPH-dependent reduction of 7-cyano-7-deazaguanine (preQ0) to 7-aminomethyl-7-deazaguanine (preQ1). This chain is NADPH-dependent 7-cyano-7-deazaguanine reductase, found in Aromatoleum aromaticum (strain DSM 19018 / LMG 30748 / EbN1) (Azoarcus sp. (strain EbN1)).